The sequence spans 471 residues: 3-isopropylmalate dehydratase large subunit (471 aa).

[4Fe-4S] cluster contacts are provided by Cys349, Cys410, and Cys413.

Belongs to the aconitase/IPM isomerase family. LeuC type 1 subfamily. As to quaternary structure, heterodimer of LeuC and LeuD. [4Fe-4S] cluster serves as cofactor.

It carries out the reaction (2R,3S)-3-isopropylmalate = (2S)-2-isopropylmalate. It participates in amino-acid biosynthesis; L-leucine biosynthesis; L-leucine from 3-methyl-2-oxobutanoate: step 2/4. Catalyzes the isomerization between 2-isopropylmalate and 3-isopropylmalate, via the formation of 2-isopropylmaleate. The sequence is that of 3-isopropylmalate dehydratase large subunit from Chromobacterium violaceum (strain ATCC 12472 / DSM 30191 / JCM 1249 / CCUG 213 / NBRC 12614 / NCIMB 9131 / NCTC 9757 / MK).